The primary structure comprises 76 residues: UPF0352 protein PC1_1633 (76 aa).

It belongs to the UPF0352 family.

This is UPF0352 protein PC1_1633 from Pectobacterium carotovorum subsp. carotovorum (strain PC1).